The following is a 269-amino-acid chain: Hydroxypyruvate/pyruvate aldolase (269 aa).

The active-site Proton acceptor is the H48. The a divalent metal cation site is built by E152 and D178.

It belongs to the HpcH/HpaI aldolase family. It depends on a divalent metal cation as a cofactor.

It catalyses the reaction D-glyceraldehyde + pyruvate = 2-dehydro-3-deoxy-L-galactonate. Aldolase which can catalyze in vitro the aldolisation reaction between hydroxypyruvate (HPA) or pyruvate (PA) and D-glyceraldehyde (D-GA). The condensation of pyruvate and D-glyceraldehyde produces 2-dehydro-3-deoxy-L-galactonate as the major product. Has weak activity with hydroxypyruvate and D-glyceraldehyde. This is Hydroxypyruvate/pyruvate aldolase from Delftia acidovorans (strain DSM 14801 / SPH-1).